Here is a 555-residue protein sequence, read N- to C-terminus: Intraflagellar transport protein 56 (555 aa).

TPR repeat units lie at residues 57–90 (LKNL…EDPD), 151–184 (IEDQ…HRDY), and 393–426 (DDFN…KYRN).

It belongs to the IFT56 family. In terms of assembly, component of the IFT complex B.

Its subcellular location is the cell projection. The protein localises to the cilium. It is found in the flagellum. In terms of biological role, component of the intraflagellar transport (IFT) complex B required for transport of proteins in the motile cilium. Required for transport of specific ciliary cargo proteins related to motility, while it is neither required for IFT complex B assembly or motion nor for cilium assembly. In Chlamydomonas reinhardtii (Chlamydomonas smithii), this protein is Intraflagellar transport protein 56.